Consider the following 653-residue polypeptide: Forkhead box protein O1 (653 aa).

Disordered stretches follow at residues 1–64 and 117–156; these read MAEA…ASAA and LHPA…SRRN. A Phosphothreonine; by PKB/AKT1 or PKB/AKT2 and SGK1 modification is found at Thr-24. The span at 35–64 shows a compositional bias: low complexity; it reads SNSATSSPAPSGGATANPDASAGLPPASAA. Residues 119 to 140 are compositionally biased toward pro residues; the sequence is PAPPQPPPPGPLSQHPPVPPAA. The fork-head DNA-binding region spans 157–233; the sequence is AWGNLSYADL…VQNEGTGKSS (77 aa). 2 DNA-binding regions span residues 209–216 and 232–235; these read NSIRHNLS and SSWW. Position 210 is a phosphoserine; by STK4/MST1 (Ser-210). A phosphoserine mark is found at Ser-216, Ser-232, and Ser-233. The tract at residues 232–335 is disordered; it reads SSWWMLNPEG…FSPIMTEQDD (104 aa). Residues Lys-243 and Lys-246 each carry the N6-acetyllysine modification. Ser-247 carries the phosphoserine; by CDK1 modification. Omega-N-methylarginine; by PRMT1 is present on residues Arg-249 and Arg-251. The short motif at 249–251 is the Nuclear localization signal element; that stretch reads RRR. Ser-254 carries the phosphoserine; by PKB/AKT1 and SGK1 modification. An N6-acetyllysine mark is found at Lys-260, Lys-263, and Lys-272. Residues 281 to 561 are sufficient for interaction with NLK; the sequence is GAGDSPGSQF…RLTPVKTPLQ (281 aa). Residues Ser-285 and Ser-296 each carry the phosphoserine modification. Positions 307–324 are enriched in polar residues; sequence NWSTFRPRTSSNASTISG. Ser-317 carries the phosphoserine; by PKB/AKT1 or PKB/AKT2 modification. Ser-320 carries the phosphoserine; by CK1 and SGK1 modification. Ser-323 bears the Phosphoserine mark. Position 327 is a phosphoserine; by DYRK1A (Ser-327). Thr-331 is subject to Phosphothreonine. The interval 361-457 is required for interaction with RUNX2; that stretch reads SEISNPENME…GGLNQFNCAQ (97 aa). Lys-421 carries the post-translational modification N6-acetyllysine. The short motif at 460–464 is the Required for interaction with SIRT1 element; the sequence is LKELL.

Interacts with LRPPRC. Interacts with RUNX2; the interaction inhibits RUNX2 transcriptional activity and mediates the IGF1/insulin-dependent BGLAP expression in osteoblasts Interacts with PPP2R1A; the interaction regulates the dephosphorylation of FOXO1 at Thr-24 and Ser-254 leading to its nuclear import. Interacts with NLK. Interacts with SIRT1; the interaction results in the deacetylation of FOXO1 leading to activation of FOXO1-mediated transcription of genes involved in DNA repair and stress resistance. Binds to CDK1. Interacts with the 14-3-3 proteins, YWHAG and YWHAZ; the interactions require insulin-stimulated phosphorylation on Thr-24, promote nuclear exit and loss of transcriptional activity. Interacts with SKP2; the interaction ubiquitinates FOXO1 leading to its proteasomal degradation. The interaction requires the presence of KRIT1. Interacts (via the C-terminal half) with ATF4 (via its DNA-binding domain); the interaction occurs in osteoblasts, regulates glucose homeostasis via suppression of beta-cell proliferation and subsequent decrease in insulin production. Interacts with PRMT1; the interaction methylates FOXO1, prevents PKB/AKT1 phosphorylation and retains FOXO1 in the nucleus. Interacts with EP300 and CREBBP; the interactions acetylate FOXO1. Interacts with SIRT2; the interaction is disrupted in response to oxidative stress or serum deprivation, leading to increased level of acetylated FOXO1, which promotes stress-induced autophagy by stimulating E1-like activating enzyme ATG7. Interacts (acetylated form) with ATG7; the interaction is increased in response to oxidative stress or serum deprivation and promotes the autophagic process leading to cell death. Interacts (acetylated form) with PPARG. Interacts with XBP1; this interaction is direct and leads to FOXO1 ubiquitination and degradation via the proteasome pathway. Interacts with WDFY2. Forms a complex with WDFY2 and AKT1. Interacts with CRY1. Interacts with PPIA/CYPA; the interaction promotes FOXO1 dephosphorylation, nuclear accumulation and transcriptional activity. Interacts with TOX4; FOXO1 is required for full induction of TOX4-dependent activity and the interaction is inhibited by insulin. Interacts (when phosphorylated on Ser-254) with STUB1/CHIP. Phosphorylation by NLK promotes nuclear export and inhibits the transcriptional activity. In response to growth factors, phosphorylation on Thr-24, Ser-254 and Ser-320 by PKB/AKT1 promotes nuclear export and inactivation of transactivational activity. Phosphorylation on Thr-24 is required for binding 14-3-3 proteins. Phosphorylation of Ser-254 decreases DNA-binding activity and promotes the phosphorylation of Thr-24 and Ser-317, permitting phosphorylation of Ser-320 and Ser-323, probably by CDK1, leading to nuclear exclusion and loss of function. Stress signals, such as response to oxygen or nitric oxide, attenuate the PKB/AKT1-mediated phosphorylation leading to nuclear retention. Phosphorylation of Ser-327 is independent of IGF1 and leads to reduced function. Dephosphorylated on Thr-24 and Ser-254 by PP2A in beta-cells under oxidative stress leading to nuclear retention. Phosphorylation of Ser-247 by CDK1 disrupts binding of 14-3-3 proteins leading to nuclear accumulation and has no effect on DNA binding nor transcriptional activity. Phosphorylation by STK4/MST1 on Ser-210, upon oxidative stress, inhibits binding to 14-3-3 proteins and nuclear export. PPIA/CYPA promotes its dephosphorylation on Ser-254. Post-translationally, ubiquitinated by SKP2. Ubiquitination leads to proteasomal degradation. Ubiquitinated by STUB1/CHIP; when Ser-254 is phosphorylated. In terms of processing, methylation inhibits AKT1-mediated phosphorylation at Ser-254 and is increased by oxidative stress. Acetylated. Acetylation at Lys-260 and Lys-272 are necessary for autophagic cell death induction. Deacetylated by SIRT2 in response to oxidative stress or serum deprivation, thereby negatively regulating FOXO1-mediated autophagic cell death. Once in the nucleus, acetylated by CREBBP/EP300. Acetylation diminishes the interaction with target DNA and attenuates the transcriptional activity. It increases the phosphorylation at Ser-254. Deacetylation by SIRT1 results in reactivation of the transcriptional activity. Oxidative stress by hydrogen peroxide treatment appears to promote deacetylation and uncoupling of insulin-induced phosphorylation. By contrast, resveratrol acts independently of acetylation. Acetylated at Lys-421, promoting its localization to the nucleus and transcription factor activity. Deacetylation at Lys-421 by SIRT6, promotes its translocation into the cytoplasm, preventing its transcription factor activity. Deacetylation and subsequent inhibition by SIRT6 has different effects depending on cell types: it inhibits gluconeogenesis in hepatocytes, promotes glucose sensing in pancreatic beta-cells and regulates lipid catabolism in brown adipocytes.

It localises to the cytoplasm. It is found in the nucleus. Transcription factor that is the main target of insulin signaling and regulates metabolic homeostasis in response to oxidative stress. Binds to the insulin response element (IRE) with consensus sequence 5'-TT[G/A]TTTTG-3' and the related Daf-16 family binding element (DBE) with consensus sequence 5'-TT[G/A]TTTAC-3'. Activity suppressed by insulin. Main regulator of redox balance and osteoblast numbers and controls bone mass. Orchestrates the endocrine function of the skeleton in regulating glucose metabolism. Also acts as a key regulator of chondrogenic commitment of skeletal progenitor cells in response to lipid availability: when lipids levels are low, translocates to the nucleus and promotes expression of SOX9, which induces chondrogenic commitment and suppresses fatty acid oxidation. Acts synergistically with ATF4 to suppress osteocalcin/BGLAP activity, increasing glucose levels and triggering glucose intolerance and insulin insensitivity. Also suppresses the transcriptional activity of RUNX2, an upstream activator of osteocalcin/BGLAP. Acts as an inhibitor of glucose sensing in pancreatic beta cells by acting as a transcription repressor and suppressing expression of PDX1. In hepatocytes, promotes gluconeogenesis by acting together with PPARGC1A and CEBPA to activate the expression of genes such as IGFBP1, G6PC1 and PCK1. Also promotes gluconeogenesis by directly promoting expression of PPARGC1A and G6PC1. Important regulator of cell death acting downstream of CDK1, PKB/AKT1 and STK4/MST1. Promotes neural cell death. Mediates insulin action on adipose tissue. Regulates the expression of adipogenic genes such as PPARG during preadipocyte differentiation and, adipocyte size and adipose tissue-specific gene expression in response to excessive calorie intake. Regulates the transcriptional activity of GADD45A and repair of nitric oxide-damaged DNA in beta-cells. Required for the autophagic cell death induction in response to starvation or oxidative stress in a transcription-independent manner. Mediates the function of MLIP in cardiomyocytes hypertrophy and cardiac remodeling. Positive regulator of apoptosis in cardiac smooth muscle cells as a result of its transcriptional activation of pro-apoptotic genes. Regulates endothelial cell (EC) viability and apoptosis in a PPIA/CYPA-dependent manner via transcription of CCL2 and BCL2L11 which are involved in EC chemotaxis and apoptosis. This is Forkhead box protein O1 (FOXO1) from Ictidomys tridecemlineatus (Thirteen-lined ground squirrel).